A 255-amino-acid chain; its full sequence is MRFDVITLFPELFTPFLASGVTRRAYATGLVDVRFWNPRDYAEGNYRRVDDRPFGGGPGMVMMAEPLERCLRAIRADRGEAPEAVAPLVMFSPIGRRLDHDGVAGWAAGNGAVLLCGRYEGVDQRFVDAHVDVQLSLGDFVLSGGEIPAMALLDAVARLQPGVLNDAGSHQEDSFNAALDGLLDCPHYTRPESWQGQAVPAALLSGHHAQIERWRRDQRLAVTARHRPDLVEAARVAGRLDRADEAVLAKLNGLL.

Residues glycine 117 and 137-142 (LGDFVL) each bind S-adenosyl-L-methionine.

It belongs to the RNA methyltransferase TrmD family. Homodimer.

Its subcellular location is the cytoplasm. The enzyme catalyses guanosine(37) in tRNA + S-adenosyl-L-methionine = N(1)-methylguanosine(37) in tRNA + S-adenosyl-L-homocysteine + H(+). In terms of biological role, specifically methylates guanosine-37 in various tRNAs. This chain is tRNA (guanine-N(1)-)-methyltransferase, found in Paracidovorax citrulli (strain AAC00-1) (Acidovorax citrulli).